The following is a 129-amino-acid chain: Biogenesis of lysosome-related organelles complex 1 subunit CNL1 (129 aa).

The protein belongs to the BLOC1S4 family. Component of the biogenesis of lysosome-related organelles complex-1 (BLOC-1).

It is found in the cytoplasm. Its function is as follows. Component of the biogenesis of lysosome-related organelles complex-1 (BLOC-1), a complex that is involved in endosomal cargo sorting. This chain is Biogenesis of lysosome-related organelles complex 1 subunit CNL1 (CLN1), found in Eremothecium gossypii (strain ATCC 10895 / CBS 109.51 / FGSC 9923 / NRRL Y-1056) (Yeast).